The chain runs to 569 residues: MYCDSFFMSRLLSLAQLSGSSWSSICLVCVTSLVFWRIKIAVTQYIRLRHIPSPSIFAAVSYIWLARTTYSGKQYWIHRDLHRQHGPLVRIGPNEITTDDPEILKKIASSGSTYSRGTWYLTGRFNPYHDNLFTILDPFAHKKAKTRSMPAYLGRDTPGLEVIINDKVKQLISILQRRYLAVLPGQDPPLVDLGLISNYFTMDVITHLAFGHQVGYLQDEKDHYNFLGSVRKLWPQMSTSADVPWIRNILFSRPVLRFLGPKHTDKKGFGALMGAAKQHVDRRFDSGEERKHDMLESLMKRGFTRQECEIEGLFLLLSGTESTACAIRQILVHVITAPSVYAKLKQEIDSTCQGRGISYPIQLAEAKRLPYLQAVIYEGIRMRPPLLGLFPKVVPEPGETFHGQFIPAGTSICTNGSSLLRSKSLFGADADLYNPGRFMELSKERREEMERNVELAFGHGQWMCAGKTIAFMELNKVVFEKHCQFFRAFDMQLHSPLKPCEVESYAGLIAKPPAKSSDLSMISRVTDMSRGINPCYRYPPQYRTHLKTHMLNVPSGSNFIRMPIVLPST.

Cys464 contributes to the heme binding site.

It belongs to the cytochrome P450 family. Heme serves as cofactor.

The protein operates within hormone biosynthesis. Its function is as follows. Cytochrome P450 monooxygenase; part of the gene cluster that mediates the biosynthesis of abscisic acid (ABA), a phytohormone that acts antagonistically toward salicylic acid (SA), jasmonic acid (JA) and ethylene (ETH) signaling, to impede plant defense responses. The first step of the pathway catalyzes the reaction from farnesyl diphosphate to alpha-ionylideneethane performed by the alpha-ionylideneethane synthase abl3 via a three-step reaction mechanism involving 2 neutral intermediates, beta-farnesene and allofarnesene. The cytochrome P450 monooxygenase abl1 might then be involved in the conversion of alpha-ionylideneethane to alpha-ionylideneacetic acid. Alpha-ionylideneacetic acid is further converted to abscisic acid in 2 steps involving the cytochrome P450 monooxygenase abl2 and the short-chain dehydrogenase/reductase abl4, via the intermediates 1'-deoxy-ABA or 1',4'-trans-diol-ABA, depending on the order of action of these 2 enzymes. Abl2 is responsible for the hydroxylation of carbon atom C-1' and abl4 might be involved in the oxidation of the C-4' carbon atom. The chain is Cytochrome P450 monooxygenase abl1 from Leptosphaeria maculans (strain JN3 / isolate v23.1.3 / race Av1-4-5-6-7-8) (Blackleg fungus).